The primary structure comprises 74 residues: Protein SMIM7 homolog (74 aa).

Residues 53–73 (FRAFIGLWNIFIMFLMLVFFG) form a helical membrane-spanning segment.

This sequence belongs to the SMIM7 family.

It localises to the membrane. This is Protein SMIM7 homolog from Ixodes scapularis (Black-legged tick).